A 344-amino-acid polypeptide reads, in one-letter code: MVSVNSSHCFYNDSFKYTLYGCMFSMVFVLGLISNCVAIYIFICVLKVRNETTTYMINLAMSDLLFVFTLPFRIFYFTTRNWPFGDLLCKISVMLFYTNMYGSILFLTCISVDRFLAIVYPFKSKTLRTKRNAKIVCTGVWLTVIGGSAPAVFVQSTHSQGNNASEACFENFPEATWKTYLSRIVIFIEIVGFFIPLILNVTCSSMVLKTLTKPVTLSRSKINKTKVLKMIFVHLIIFCFCFVPYNINLILYSLVRTQTFVNCSVVAAVRTMYPITLCIAVSNCCFDPIVYYFTSDTIQNSIKMKNWSVRRSDFRFSEVHGAENFIQHNLQTLKSKIFDNESAA.

Residues 1 to 19 (MVSVNSSHCFYNDSFKYTL) are Extracellular-facing. N-linked (GlcNAc...) asparagine glycosylation is present at Asn5. Residues 20 to 46 (YGCMFSMVFVLGLISNCVAIYIFICVL) form a helical membrane-spanning segment. Residues 47–55 (KVRNETTTY) are Cytoplasmic-facing. A helical transmembrane segment spans residues 56–79 (MINLAMSDLLFVFTLPFRIFYFTT). At 80–92 (RNWPFGDLLCKIS) the chain is on the extracellular side. A disulfide bridge links Cys89 with Cys168. A helical membrane pass occupies residues 93-112 (VMLFYTNMYGSILFLTCISV). At 113-133 (DRFLAIVYPFKSKTLRTKRNA) the chain is on the cytoplasmic side. Residues 134–154 (KIVCTGVWLTVIGGSAPAVFV) form a helical membrane-spanning segment. Residues 155–181 (QSTHSQGNNASEACFENFPEATWKTYL) are Extracellular-facing. A helical membrane pass occupies residues 182–209 (SRIVIFIEIVGFFIPLILNVTCSSMVLK). Topologically, residues 210 to 227 (TLTKPVTLSRSKINKTKV) are cytoplasmic. Residues 228 to 253 (LKMIFVHLIIFCFCFVPYNINLILYS) form a helical membrane-spanning segment. Over 254-272 (LVRTQTFVNCSVVAAVRTM) the chain is Extracellular. The chain crosses the membrane as a helical span at residues 273–292 (YPITLCIAVSNCCFDPIVYY). Cys284 carries the S-palmitoyl cysteine lipid modification. Topologically, residues 293-344 (FTSDTIQNSIKMKNWSVRRSDFRFSEVHGAENFIQHNLQTLKSKIFDNESAA) are cytoplasmic.

Belongs to the G-protein coupled receptor 1 family. Expressed ubiquitously, including in skin and hair follicle cells. Detected in both Henle's and Huxley's layers of the inner root sheath of the hair follicle and in suprabasal layers of the epidermis (at protein level). Expressed at low levels in peripheral blood leukocytes.

The protein localises to the cell membrane. Its function is as follows. Binds to oleoyl-L-alpha-lysophosphatidic acid (LPA). Intracellular cAMP is involved in the receptor activation. Important for the maintenance of hair growth and texture. The polypeptide is Lysophosphatidic acid receptor 6 (LPAR6) (Homo sapiens (Human)).